The chain runs to 126 residues: Small ribosomal subunit protein bS16 (126 aa).

The interval 87–126 (ARSNPEKALPGKRALERVAEKKQKAEDAAAAAAAEASAAE) is disordered. The span at 99 to 113 (RALERVAEKKQKAED) shows a compositional bias: basic and acidic residues. Positions 114–126 (AAAAAAAEASAAE) are enriched in low complexity.

This sequence belongs to the bacterial ribosomal protein bS16 family.

The protein is Small ribosomal subunit protein bS16 of Agrobacterium fabrum (strain C58 / ATCC 33970) (Agrobacterium tumefaciens (strain C58)).